Reading from the N-terminus, the 339-residue chain is 1-aminocyclopropane-1-carboxylate deaminase (339 aa).

Position 52 is an N6-(pyridoxal phosphate)lysine (Lys-52). Ser-79 serves as the catalytic Nucleophile.

This sequence belongs to the ACC deaminase/D-cysteine desulfhydrase family. In terms of assembly, homotrimer. It depends on pyridoxal 5'-phosphate as a cofactor.

The catalysed reaction is 1-aminocyclopropane-1-carboxylate + H2O = 2-oxobutanoate + NH4(+). In terms of biological role, catalyzes a cyclopropane ring-opening reaction, the irreversible conversion of 1-aminocyclopropane-1-carboxylate (ACC) to ammonia and alpha-ketobutyrate. Allows growth on ACC as a nitrogen source. This chain is 1-aminocyclopropane-1-carboxylate deaminase, found in Bradyrhizobium sp. (strain ORS 278).